We begin with the raw amino-acid sequence, 1114 residues long: Filamentous growth regulator 23 (1114 aa).

The first 21 residues, 1 to 21, serve as a signal peptide directing secretion; sequence MFASYLLLVLWIIRLVPTTHA. Disordered stretches follow at residues 232 to 256 and 284 to 314; these read GSET…PSTT and SSSI…TSSS. The span at 240–252 shows a compositional bias: pro residues; that stretch reads TTAPKPVETPSPE. Residues Asn382, Asn397, Asn475, Asn490, Asn506, Asn539, Asn565, Asn591, Asn637, Asn687, and Asn739 are each glycosylated (N-linked (GlcNAc...) asparagine). The tract at residues 392–430 is disordered; the sequence is SETTTNESSSYTDEPSSSEEITNTYEPSSSTESSTTDQF. The disordered stretch occupies residues 764 to 784; sequence TSTLTSSHTSDNEKPASLSSS. N-linked (GlcNAc...) asparagine glycosylation is present at Asn831. Composition is skewed to low complexity over residues 844–910 and 922–941; these read SASS…SSSS and SSSV…ESSS. The tract at residues 844–963 is disordered; that stretch reads SASSSYHSSE…ANENTSEITT (120 aa). Positions 942–963 are enriched in polar residues; the sequence is NGLVSTVTESSTANENTSEITT. 3 N-linked (GlcNAc...) asparagine glycosylation sites follow: Asn957, Asn966, and Asn1070. The GPI-anchor amidated asparagine moiety is linked to residue Asn1089. A propeptide spans 1090-1114 (removed in mature form); it reads ANSLGLKNGDNSWIIGIMMIGLLMI.

It localises to the cell membrane. In terms of biological role, putative adhesin which may be involved in cell adhesion and virulence. Involved in the regulation of filamentous growth. This is Filamentous growth regulator 23 (FGR23) from Candida albicans (strain SC5314 / ATCC MYA-2876) (Yeast).